The primary structure comprises 498 residues: ATP synthase subunit beta, chloroplastic (498 aa).

172–179 (GGAGVGKT) provides a ligand contact to ATP.

It belongs to the ATPase alpha/beta chains family. F-type ATPases have 2 components, CF(1) - the catalytic core - and CF(0) - the membrane proton channel. CF(1) has five subunits: alpha(3), beta(3), gamma(1), delta(1), epsilon(1). CF(0) has four main subunits: a(1), b(1), b'(1) and c(9-12).

It localises to the plastid. The protein localises to the chloroplast thylakoid membrane. The enzyme catalyses ATP + H2O + 4 H(+)(in) = ADP + phosphate + 5 H(+)(out). In terms of biological role, produces ATP from ADP in the presence of a proton gradient across the membrane. The catalytic sites are hosted primarily by the beta subunits. The chain is ATP synthase subunit beta, chloroplastic from Phalaenopsis aphrodite subsp. formosana (Moth orchid).